The sequence spans 264 residues: MDNRPIGFLDSGVGGLTVVSELMRQLPHEKIIYIGDSARAPYGPRPAEQIREYTWELVRFLLTKHVKMIVFACNTATAVAWEEVKEALDIPVLGVILPGASAAIKATSGGKVGVIGTSMTISSGIYQEKIQLLAPTVQVTSLACPRFVPIVESNEISSSVAKKIVYETLAPLVGKIDTLVLGCTHYPLLRTIIQNVLGPQVKLIDSGAECVRDISVLLNYFEINGSRDDEHRRHHFYTTAGSDSFQAIASAWLNQTIDVEHVTL.

Substrate-binding positions include 10 to 11 (DS) and 42 to 43 (YG). C73 serves as the catalytic Proton donor/acceptor. 74-75 (NT) lines the substrate pocket. The active-site Proton donor/acceptor is the C183. Substrate is bound at residue 184–185 (TH).

Belongs to the aspartate/glutamate racemases family.

The enzyme catalyses L-glutamate = D-glutamate. Its pathway is cell wall biogenesis; peptidoglycan biosynthesis. Functionally, provides the (R)-glutamate required for cell wall biosynthesis. The polypeptide is Glutamate racemase (Streptococcus equi subsp. zooepidemicus (strain H70)).